We begin with the raw amino-acid sequence, 91 residues long: Small ribosomal subunit protein uS19 (91 aa).

The protein belongs to the universal ribosomal protein uS19 family.

Its function is as follows. Protein S19 forms a complex with S13 that binds strongly to the 16S ribosomal RNA. In Marinobacter nauticus (strain ATCC 700491 / DSM 11845 / VT8) (Marinobacter aquaeolei), this protein is Small ribosomal subunit protein uS19.